The chain runs to 308 residues: D-alanine--D-alanine ligase (308 aa).

In terms of domain architecture, ATP-grasp spans 105-302; it reads KAIFRSLGLA…FPDLCERILD (198 aa). An ATP-binding site is contributed by 133–188; that stretch reads DLPFGLPCVVKPAGEGSSVGVHLVNEAAELGPACRDAASHAGDVIVERYVKGTEVD. The Mg(2+) site is built by Asp-256, Glu-269, and Asn-271.

The protein belongs to the D-alanine--D-alanine ligase family. Mg(2+) serves as cofactor. Mn(2+) is required as a cofactor.

It is found in the cytoplasm. It carries out the reaction 2 D-alanine + ATP = D-alanyl-D-alanine + ADP + phosphate + H(+). It participates in cell wall biogenesis; peptidoglycan biosynthesis. In terms of biological role, cell wall formation. The polypeptide is D-alanine--D-alanine ligase (Anaeromyxobacter dehalogenans (strain 2CP-1 / ATCC BAA-258)).